Here is a 386-residue protein sequence, read N- to C-terminus: S-adenosylmethionine synthase (386 aa).

Histidine 14 contacts ATP. Aspartate 16 contacts Mg(2+). Residue glutamate 42 coordinates K(+). L-methionine-binding residues include glutamate 55 and glutamine 101. Residues 101 to 111 (QSADIALGVDE) form a flexible loop region. ATP-binding positions include 166 to 168 (DGK), 233 to 234 (RF), aspartate 242, 248 to 249 (RK), alanine 265, and lysine 269. Residue aspartate 242 participates in L-methionine binding. Lysine 273 contacts L-methionine.

The protein belongs to the AdoMet synthase family. Homotetramer; dimer of dimers. It depends on Mg(2+) as a cofactor. K(+) is required as a cofactor.

Its subcellular location is the cytoplasm. It catalyses the reaction L-methionine + ATP + H2O = S-adenosyl-L-methionine + phosphate + diphosphate. It participates in amino-acid biosynthesis; S-adenosyl-L-methionine biosynthesis; S-adenosyl-L-methionine from L-methionine: step 1/1. Its function is as follows. Catalyzes the formation of S-adenosylmethionine (AdoMet) from methionine and ATP. The overall synthetic reaction is composed of two sequential steps, AdoMet formation and the subsequent tripolyphosphate hydrolysis which occurs prior to release of AdoMet from the enzyme. This is S-adenosylmethionine synthase from Acholeplasma laidlawii (strain PG-8A).